A 64-amino-acid chain; its full sequence is Ribosome biogenesis protein Nop10 (64 aa).

This sequence belongs to the NOP10 family.

Involved in ribosome biogenesis; more specifically in 18S rRNA pseudouridylation and in cleavage of pre-rRNA. This Ignicoccus hospitalis (strain KIN4/I / DSM 18386 / JCM 14125) protein is Ribosome biogenesis protein Nop10.